A 419-amino-acid polypeptide reads, in one-letter code: S-adenosylmethionine synthase (419 aa).

His-15 provides a ligand contact to ATP. Asp-17 serves as a coordination point for Mg(2+). Glu-43 is a K(+) binding site. L-methionine contacts are provided by Glu-56 and Gln-99. Residues 99–109 are flexible loop; that stretch reads QSPEIAQGVSC. ATP-binding positions include 173-175, 253-254, Asp-262, 268-269, Ala-285, and Lys-289; these read DGK, RF, and RK. Asp-262 serves as a coordination point for L-methionine. L-methionine is bound at residue Lys-293.

The protein belongs to the AdoMet synthase family. As to quaternary structure, homotetramer; dimer of dimers. Mg(2+) serves as cofactor. It depends on K(+) as a cofactor.

The protein resides in the cytoplasm. It carries out the reaction L-methionine + ATP + H2O = S-adenosyl-L-methionine + phosphate + diphosphate. It functions in the pathway amino-acid biosynthesis; S-adenosyl-L-methionine biosynthesis; S-adenosyl-L-methionine from L-methionine: step 1/1. Catalyzes the formation of S-adenosylmethionine (AdoMet) from methionine and ATP. The overall synthetic reaction is composed of two sequential steps, AdoMet formation and the subsequent tripolyphosphate hydrolysis which occurs prior to release of AdoMet from the enzyme. The chain is S-adenosylmethionine synthase from Gloeobacter violaceus (strain ATCC 29082 / PCC 7421).